The sequence spans 327 residues: Fructose-1,6-bisphosphatase class 1 (327 aa).

The Mg(2+) site is built by glutamate 84, aspartate 103, leucine 105, and aspartate 106. Residues 106–109 (DGSS), asparagine 197, and lysine 263 each bind substrate. Position 269 (glutamate 269) interacts with Mg(2+).

Belongs to the FBPase class 1 family. In terms of assembly, homotetramer. Mg(2+) serves as cofactor.

It localises to the cytoplasm. It carries out the reaction beta-D-fructose 1,6-bisphosphate + H2O = beta-D-fructose 6-phosphate + phosphate. Its pathway is carbohydrate biosynthesis; gluconeogenesis. In Idiomarina loihiensis (strain ATCC BAA-735 / DSM 15497 / L2-TR), this protein is Fructose-1,6-bisphosphatase class 1.